We begin with the raw amino-acid sequence, 89 residues long: Small ribosomal subunit protein uS17 (89 aa).

It belongs to the universal ribosomal protein uS17 family. Part of the 30S ribosomal subunit.

One of the primary rRNA binding proteins, it binds specifically to the 5'-end of 16S ribosomal RNA. This chain is Small ribosomal subunit protein uS17, found in Chlorobium phaeobacteroides (strain BS1).